The chain runs to 200 residues: 3-isopropylmalate dehydratase small subunit (200 aa).

It belongs to the LeuD family. LeuD type 1 subfamily. Heterodimer of LeuC and LeuD.

It catalyses the reaction (2R,3S)-3-isopropylmalate = (2S)-2-isopropylmalate. Its pathway is amino-acid biosynthesis; L-leucine biosynthesis; L-leucine from 3-methyl-2-oxobutanoate: step 2/4. Its function is as follows. Catalyzes the isomerization between 2-isopropylmalate and 3-isopropylmalate, via the formation of 2-isopropylmaleate. This chain is 3-isopropylmalate dehydratase small subunit, found in Arthrobacter sp. (strain FB24).